The primary structure comprises 156 residues: Large ribosomal subunit protein uL15 (156 aa).

Basic and acidic residues predominate over residues 1-11; the sequence is MKLNDLRDKPG. A disordered region spans residues 1-44; sequence MKLNDLRDKPGSVKARKRVGRGIGSGTGKTGGRGVKGQKSRSGV. Residues 21–35 are compositionally biased toward gly residues; the sequence is RGIGSGTGKTGGRGV.

It belongs to the universal ribosomal protein uL15 family. As to quaternary structure, part of the 50S ribosomal subunit.

Its function is as follows. Binds to the 23S rRNA. This Brucella abortus (strain S19) protein is Large ribosomal subunit protein uL15.